We begin with the raw amino-acid sequence, 65 residues long: uncharacterized protein (65 aa).

This is an uncharacterized protein from Treponema pallidum (strain Nichols).